The chain runs to 487 residues: Probable peptidoglycan glycosyltransferase FtsW (487 aa).

The next 9 helical transmembrane spans lie at valine 30 to alanine 50, isoleucine 71 to tryptophan 91, threonine 93 to glycine 113, tryptophan 122 to cysteine 142, valine 167 to valine 187, leucine 203 to phenylalanine 223, phenylalanine 282 to leucine 302, isoleucine 332 to proline 352, and phenylalanine 358 to leucine 378. Disordered stretches follow at residues lysine 398–lysine 419 and isoleucine 444–valine 487. Residues alanine 401 to serine 416 are compositionally biased toward polar residues. The span at isoleucine 444–glutamine 453 shows a compositional bias: acidic residues.

The protein belongs to the SEDS family. FtsW subfamily.

The protein localises to the cell inner membrane. The catalysed reaction is [GlcNAc-(1-&gt;4)-Mur2Ac(oyl-L-Ala-gamma-D-Glu-L-Lys-D-Ala-D-Ala)](n)-di-trans,octa-cis-undecaprenyl diphosphate + beta-D-GlcNAc-(1-&gt;4)-Mur2Ac(oyl-L-Ala-gamma-D-Glu-L-Lys-D-Ala-D-Ala)-di-trans,octa-cis-undecaprenyl diphosphate = [GlcNAc-(1-&gt;4)-Mur2Ac(oyl-L-Ala-gamma-D-Glu-L-Lys-D-Ala-D-Ala)](n+1)-di-trans,octa-cis-undecaprenyl diphosphate + di-trans,octa-cis-undecaprenyl diphosphate + H(+). It functions in the pathway cell wall biogenesis; peptidoglycan biosynthesis. Peptidoglycan polymerase that is essential for cell division. This chain is Probable peptidoglycan glycosyltransferase FtsW, found in Pseudoalteromonas atlantica (strain T6c / ATCC BAA-1087).